A 315-amino-acid chain; its full sequence is MMNPFFQNTSCSPYYRTDQPCSLGNYVSYAIPVAGVADIVAAINFTQTHNVRLVIKNTGHDYMGKSTGRGALSLWTHNLKSRQLVNYSSAHYTGPAIKVGAGVTGGEALVHASASGYRIVSGDCPTVGYSGGYSSGGGHSILNSVHGLAADNVLEWEVVTADGRHVVASPDQNSDLYWAMSGGGGGTFAVALSMTSRVHADSIIGAASLSFNATSAPSNDSFVSALNAWWAFLPSLVDVGATPSWNIFAGNFLVPNTTAPGRTAADMDTLYSPFLSELKRLGIPYAFESFSAPNYLQHYNDTDGPLPDGPLAAWA.

The FAD-binding PCMH-type domain maps to 19-201 (QPCSLGNYVS…LSMTSRVHAD (183 aa)).

It belongs to the oxygen-dependent FAD-linked oxidoreductase family.

The catalysed reaction is betaenone C = betaenone A. The enzyme catalyses stemphyloxin I = stemphyloxin II. It participates in mycotoxin biosynthesis. In terms of biological role, FAD-linked oxidoreductase; part of the gene cluster that mediates the biosynthesis of the phytotoxin stemphyloxin II. The first step of the pathway is the synthesis of dehydroprobetaenone I by the polyketide synthase sthA and the enoyl reductase sthE via condensation of one acetyl-CoA starter unit with 7 malonyl-CoA units and 5 methylations. The C-terminal reductase (R) domain of sthA catalyzes the reductive release of the polyketide chain. Because sthA lacks a designated enoylreductase (ER) domain, the required activity is provided the enoyl reductase sthE. The short-chain dehydrogenase/reductase sthC then catalyzes reduction of dehydroprobetaenone I to probetaenone I. The cytochrome P450 monooxygenase sthF catalyzes successive epoxidation, oxidation (resulting from epoxide opening) and hydroxylation to install a tertiary alcohol in the decaline ring to yield betaenone C from dehydroprobetaenone I and betaenone B from probetaenone I. The FAD-linked oxidoreductase sthB is responsible for the conversion of betaenone C to betaenone A via an intramolecular aldol reaction between C-1 and C-17 to form the bridged tricyclic system in betaenone A. Finally, the cytochrome P450 monooxygenase sthD catalyzes the hydroxylation of C-15 to afford the final metabolite stemphyloxin II. The sequence is that of FAD-linked oxidoreductase sthB from Phaeosphaeria nodorum (strain SN15 / ATCC MYA-4574 / FGSC 10173) (Glume blotch fungus).